A 131-amino-acid polypeptide reads, in one-letter code: Small ribosomal subunit protein uS8 (131 aa).

Belongs to the universal ribosomal protein uS8 family. As to quaternary structure, part of the 30S ribosomal subunit. Contacts proteins S5 and S12.

Functionally, one of the primary rRNA binding proteins, it binds directly to 16S rRNA central domain where it helps coordinate assembly of the platform of the 30S subunit. This Acinetobacter baumannii (strain AB307-0294) protein is Small ribosomal subunit protein uS8.